A 75-amino-acid chain; its full sequence is Putative membrane protein insertion efficiency factor (75 aa).

The protein belongs to the UPF0161 family.

Its subcellular location is the cell inner membrane. Its function is as follows. Could be involved in insertion of integral membrane proteins into the membrane. The polypeptide is Putative membrane protein insertion efficiency factor (Leptospira biflexa serovar Patoc (strain Patoc 1 / ATCC 23582 / Paris)).